An 84-amino-acid chain; its full sequence is DNA-directed RNA polymerase subunit Rpo5 (84 aa).

It belongs to the archaeal Rpo5/eukaryotic RPB5 RNA polymerase subunit family. Part of the 13-subunit RNA polymerase.

It is found in the cytoplasm. It catalyses the reaction RNA(n) + a ribonucleoside 5'-triphosphate = RNA(n+1) + diphosphate. In terms of biological role, DNA-dependent RNA polymerase (RNAP) catalyzes the transcription of DNA into RNA using the four ribonucleoside triphosphates as substrates. Functionally, reconstitution experiments show this subunit is required for basic activity. This Sulfolobus acidocaldarius (strain ATCC 33909 / DSM 639 / JCM 8929 / NBRC 15157 / NCIMB 11770) protein is DNA-directed RNA polymerase subunit Rpo5.